Consider the following 275-residue polypeptide: NH(3)-dependent NAD(+) synthetase (275 aa).

39 to 46 (GLSGGVDS) contributes to the ATP binding site. Asp-45 serves as a coordination point for Mg(2+). Arg-124 is a binding site for deamido-NAD(+). Thr-144 provides a ligand contact to ATP. Glu-149 contacts Mg(2+). Deamido-NAD(+)-binding residues include Lys-157 and Asp-164. ATP is bound by residues Lys-173 and Ser-195. 255 to 256 (HK) lines the deamido-NAD(+) pocket.

It belongs to the NAD synthetase family. In terms of assembly, homodimer.

It catalyses the reaction deamido-NAD(+) + NH4(+) + ATP = AMP + diphosphate + NAD(+) + H(+). It participates in cofactor biosynthesis; NAD(+) biosynthesis; NAD(+) from deamido-NAD(+) (ammonia route): step 1/1. Its function is as follows. Catalyzes the ATP-dependent amidation of deamido-NAD to form NAD. Uses ammonia as a nitrogen source. This is NH(3)-dependent NAD(+) synthetase from Staphylothermus marinus (strain ATCC 43588 / DSM 3639 / JCM 9404 / F1).